Here is a 361-residue protein sequence, read N- to C-terminus: Actin maturation protease (361 aa).

The interval 1 to 75 (MTSPCSFPLK…PPPPPLPSAV (75 aa)) is disordered. Composition is skewed to pro residues over residues 24-33 (NIPPPLPLNP) and 52-72 (PLPP…PPLP). The peptidase C39-like stretch occupies residues 134 to 254 (SCIQEGPQCG…WAVSAGVLIG (121 aa)). The active site involves Cys142.

This sequence belongs to the ACTMAP family. As to quaternary structure, interacts (via N-terminus) with PFN2 isoforms 1/IIa and 2/IIb; the interactions may facilitate efficient cleavage of the acetylated N-terminus of immature actin. Interacts with PFN1.

It is found in the cytoplasm. It catalyses the reaction N-terminal N(alpha)-acetyl-L-methionyl-L-aspartyl-[protein] + H2O = N-terminal L-aspartyl-[protein] + N-acetyl-L-methionine. It carries out the reaction N-terminal N(alpha)-acetyl-L-methionyl-L-glutamyl-[protein] + H2O = N-terminal L-glutamyl-[protein] + N-acetyl-L-methionine. The catalysed reaction is N-terminal N(alpha)-acetyl-L-cysteinyl-L-aspartyl-[protein] + H2O = N-terminal L-aspartyl-[protein] + N-acetyl-L-cysteine. The enzyme catalyses N-terminal N(alpha)-acetyl-L-cysteinyl-L-glutamyl-[protein] + H2O = N-terminal L-glutamyl-[protein] + N-acetyl-L-cysteine. Functionally, actin maturation protease that specifically mediates the cleavage of immature acetylated N-terminal actin, thereby contributing to actin maturation. Cleaves N-terminal acetylated methionine of immature cytoplasmic beta- and gamma-actins Actb and Actg1 after translation. Cleaves N-terminal acetylated cysteine of muscle alpha-actins Acta1, Actc1 and Acta2 after canonical removal of N-terminal methionine. The chain is Actin maturation protease from Mus musculus (Mouse).